A 417-amino-acid chain; its full sequence is GTP-binding protein YPT11 (417 aa).

Positions 1 to 34 are disordered; it reads MSQRKRYSLNVVTSPSIPSPTPSAPIRTNESNWE. Residues 97–104, 228–232, and 292–295 contribute to the GTP site; these read GDANVGKT, DTAGQ, and NKID. Residues C415 and C416 are each lipidated (S-geranylgeranyl cysteine).

The protein belongs to the small GTPase superfamily. Rab family. In terms of assembly, interacts with MYO2 (via C-terminal tail domain). Interacts with YIF1, YIP3, YIP4 and YIP5.

It is found in the endoplasmic reticulum membrane. Its subcellular location is the bud tip. The protein localises to the bud neck. In terms of biological role, involved in the positive control of both endoplasmic reticulum (ER) and mitochondrion inheritance during cell divison. Required for the MYO2-dependent retention of newly inherited mitochondria at the bud tip in developing daughter cells. The polypeptide is GTP-binding protein YPT11 (YPT11) (Saccharomyces cerevisiae (strain RM11-1a) (Baker's yeast)).